Reading from the N-terminus, the 374-residue chain is WAT1-related protein At1g60050 (374 aa).

10 helical membrane-spanning segments follow: residues 11–31 (IVPF…TILA), 42–62 (FVFI…YSFY), 82–102 (IFLL…LGLS), 107–127 (IVVC…SLAL), 145–165 (IGTL…GPFI), 194–214 (WALG…WNII), 228–248 (VVSA…AFME), 255–275 (ELKL…GSII), 292–312 (VPLF…SFFV), and 315–335 (LHYG…LIMW). The region spanning 26–155 (ALTILAKTAL…GTLICFTGAF (130 aa)) is the EamA domain.

This sequence belongs to the drug/metabolite transporter (DMT) superfamily. Plant drug/metabolite exporter (P-DME) (TC 2.A.7.4) family.

It is found in the membrane. The protein is WAT1-related protein At1g60050 of Arabidopsis thaliana (Mouse-ear cress).